A 189-amino-acid chain; its full sequence is Ras-like protein 1 (189 aa).

10–17 (GGGGVGKS) is a GTP binding site. The Effector region signature appears at 32–40 (YDPTIEDSY). Residues 57 to 61 (DTAGQ) and 116 to 119 (NKCD) contribute to the GTP site. C186 carries the cysteine methyl ester modification. The S-geranylgeranyl cysteine moiety is linked to residue C186. Positions 187 to 189 (LLL) are cleaved as a propeptide — removed in mature form.

The protein belongs to the small GTPase superfamily. Ras family.

The protein localises to the cell membrane. It catalyses the reaction GTP + H2O = GDP + phosphate + H(+). Its function is as follows. Ras proteins bind GDP/GTP and possess intrinsic GTPase activity. This Physarum polycephalum (Slime mold) protein is Ras-like protein 1 (RAS1).